A 33-amino-acid polypeptide reads, in one-letter code: Photosystem II reaction center protein Psb30 (33 aa).

A helical transmembrane segment spans residues 5 to 25; the sequence is VIAQLTVLALIVISGPLVIAL.

Belongs to the Psb30/Ycf12 family. In terms of assembly, PSII is composed of 1 copy each of membrane proteins PsbA, PsbB, PsbC, PsbD, PsbE, PsbF, PsbH, PsbI, PsbJ, PsbK, PsbL, PsbM, PsbT, PsbX, PsbY, PsbZ, Psb30/Ycf12, peripheral proteins of the oxygen-evolving complex and a large number of cofactors. It forms dimeric complexes.

The protein resides in the plastid. The protein localises to the chloroplast thylakoid membrane. In terms of biological role, a core subunit of photosystem II (PSII), probably helps stabilize the reaction center. The sequence is that of Photosystem II reaction center protein Psb30 from Huperzia lucidula (Shining clubmoss).